A 754-amino-acid chain; its full sequence is Zinc finger protein with KRAB and SCAN domains 7 (754 aa).

A Glycyl lysine isopeptide (Lys-Gly) (interchain with G-Cter in SUMO2) cross-link involves residue K28. The 83-residue stretch at R54–L136 folds into the SCAN box domain. Residues T157–D215 are disordered. 2 stretches are compositionally biased toward polar residues: residues A158–S172 and Q199–D215. The 76-residue stretch at V231–P306 folds into the KRAB domain. 10 consecutive C2H2-type zinc fingers follow at residues Y383 to H405, Y411 to H433, Y439 to H461, Y467 to H489, Y495 to H517, Y523 to H545, Y551 to H573, Y579 to H601, F607 to H629, and Y635 to H657. The C2H2-type 11; degenerate zinc finger occupies Y663–H685. 2 consecutive C2H2-type zinc fingers follow at residues Y691–H713 and Y719–H741. Residues N735–S754 are disordered.

It belongs to the krueppel C2H2-type zinc-finger protein family.

The protein localises to the nucleus. Its function is as follows. May be involved in transcriptional regulation. In Homo sapiens (Human), this protein is Zinc finger protein with KRAB and SCAN domains 7 (ZKSCAN7).